A 149-amino-acid polypeptide reads, in one-letter code: Large ribosomal subunit protein bL17 (149 aa).

The protein belongs to the bacterial ribosomal protein bL17 family. In terms of assembly, part of the 50S ribosomal subunit. Contacts protein L32.

This is Large ribosomal subunit protein bL17 from Kosmotoga olearia (strain ATCC BAA-1733 / DSM 21960 / TBF 19.5.1).